A 235-amino-acid chain; its full sequence is UPF0758 protein COPRO5265_1522 (235 aa).

In terms of domain architecture, MPN spans 109 to 235 (RITTPEDAIE…HVSLAREKLI (127 aa)). Zn(2+)-binding residues include H184, H186, and D197. Positions 184–197 (HNHPSGDPSPSRED) match the JAMM motif motif.

It belongs to the UPF0758 family.

This chain is UPF0758 protein COPRO5265_1522, found in Coprothermobacter proteolyticus (strain ATCC 35245 / DSM 5265 / OCM 4 / BT).